Reading from the N-terminus, the 364-residue chain is Homeobox protein KNOX3 (364 aa).

Positions 13–49 (TAHGQHHSQLPWGSSPLSAVISPPPQQQQQHQQQSAG) are disordered. A compositionally biased stretch (polar residues) spans 19–29 (HSQLPWGSSPL). In terms of domain architecture, ELK spans 246–266 (ELKHHLLKKYSGYLSSLKQEL). A DNA-binding region (homeobox; TALE-type) is located at residues 267–330 (SKKKKKGKLP…NQRKRHWKPT (64 aa)).

The protein belongs to the TALE/KNOX homeobox family. Binds DNA as a monomer. In terms of tissue distribution, the unit of inflorescence is the spikelet, which bears a fertile tract, the lemma, and the floret consisting of palea, two lodicules, three stamens and the pistil. The lemma is completed by the awn, an appendage homologous to the laminae of normal leaves. Expressed in the inflorescences and lemmas and at lower levels, in palea and vascular bundles.

It localises to the nucleus. Its function is as follows. May play a role in meristem formation and/or maintenance. Overexpression causes the hooded phenotype characterized by the appearance of an extra flower of inverse polarity on the lemma. Binds to the DNA sequence 5'-TGAC-3'. This Hordeum vulgare (Barley) protein is Homeobox protein KNOX3 (KNOX3).